The sequence spans 604 residues: Replication protein E1 (604 aa).

The Nuclear localization signal motif lies at 76 to 78 (KRK). 2 positions are modified to phosphoserine; by host: Ser81 and Ser89. The Nuclear export signal signature appears at 88–97 (LSPRLESISL). A DNA-binding region region spans residues 144–307 (GSGAIDIDYL…TILGHQNAEA (164 aa)). In terms of domain architecture, SF3 helicase spans 406–556 (VNFITFLAAF…FPMKPDNTPQ (151 aa)). 432 to 439 (GPPNSGKS) is an ATP binding site. Lys513 participates in a covalent cross-link: Glycyl lysine isopeptide (Lys-Gly) (interchain with G-Cter in SUMO). The tract at residues 579–604 (DQEEEGQHGESQRAFQCSARSANEHI) is disordered. The span at 591–604 (RAFQCSARSANEHI) shows a compositional bias: polar residues.

It belongs to the papillomaviridae E1 protein family. As to quaternary structure, can form hexamers. Interacts with E2 protein; this interaction increases E1 DNA binding specificity. Interacts with host DNA polymerase subunit POLA2. Interacts with host single stranded DNA-binding protein RPA1. Interacts with host TOP1; this interaction stimulates the enzymatic activity of TOP1. Post-translationally, phosphorylated. Sumoylated.

Its subcellular location is the host nucleus. The catalysed reaction is Couples ATP hydrolysis with the unwinding of duplex DNA by translocating in the 3'-5' direction.. It catalyses the reaction ATP + H2O = ADP + phosphate + H(+). Its function is as follows. ATP-dependent DNA 3'-5' helicase required for initiation of viral DNA replication. It forms a complex with the viral E2 protein. The E1-E2 complex binds to the replication origin which contains binding sites for both proteins. During the initial step, a dimer of E1 interacts with a dimer of protein E2 leading to a complex that binds the viral origin of replication with high specificity. Then, a second dimer of E1 displaces the E2 dimer in an ATP-dependent manner to form the E1 tetramer. Following this, two E1 monomers are added to each half of the site, which results in the formation of two E1 trimers on the viral ori. Subsequently, two hexamers will be created. The double hexamer acts as a bi-directional helicase machinery and unwinds the viral DNA and then recruits the host DNA polymerase to start replication. The polypeptide is Replication protein E1 (Human papillomavirus 12).